Reading from the N-terminus, the 334-residue chain is Anthranilate phosphoribosyltransferase (334 aa).

Residues Gly79, 82 to 83 (GD), Ser87, 89 to 92 (NIST), 107 to 115 (KAGNRSISS), and Ser119 each bind 5-phospho-alpha-D-ribose 1-diphosphate. Residue Gly79 coordinates anthranilate. Ser91 contacts Mg(2+). Asn110 is an anthranilate binding site. Arg165 provides a ligand contact to anthranilate. Positions 224 and 225 each coordinate Mg(2+).

This sequence belongs to the anthranilate phosphoribosyltransferase family. Homodimer. It depends on Mg(2+) as a cofactor.

It catalyses the reaction N-(5-phospho-beta-D-ribosyl)anthranilate + diphosphate = 5-phospho-alpha-D-ribose 1-diphosphate + anthranilate. Its pathway is amino-acid biosynthesis; L-tryptophan biosynthesis; L-tryptophan from chorismate: step 2/5. Functionally, catalyzes the transfer of the phosphoribosyl group of 5-phosphorylribose-1-pyrophosphate (PRPP) to anthranilate to yield N-(5'-phosphoribosyl)-anthranilate (PRA). The polypeptide is Anthranilate phosphoribosyltransferase (Streptococcus thermophilus (strain ATCC BAA-250 / LMG 18311)).